Consider the following 389-residue polypeptide: 11-beta-hydroxysteroid dehydrogenase-like 5 (389 aa).

The chain crosses the membrane as a helical; Signal-anchor for type II membrane protein span at residues 11 to 31 (LVAPPATMVVMAFAWPLLSFI). NADP(+) contacts are provided by residues 56 to 82 (GASSAIGEQIAYEYAKRGANLVLVARR) and D107. S186 serves as a coordination point for substrate. The active-site Proton acceptor is Y199. Residues 199–203 (YSAAK) and K203 contribute to the NADP(+) site. The disordered stretch occupies residues 337–381 (LMLEGGPPRVPASPPRYTASPPHYTASPPRYPASPPRYPASPPRF). Positions 365 to 378 (PRYPASPPRYPASP) are enriched in pro residues.

The protein belongs to the short-chain dehydrogenases/reductases (SDR) family.

It is found in the membrane. The protein is 11-beta-hydroxysteroid dehydrogenase-like 5 (HSD5) of Arabidopsis thaliana (Mouse-ear cress).